The primary structure comprises 139 residues: Early placenta insulin-like peptide (139 aa).

The N-terminal stretch at 1-25 (MASLFRSYLPAIWLLLSQLLRESLA) is a signal peptide. Intrachain disulfides connect Cys31/Cys125, Cys43/Cys138, and Cys124/Cys129. Positions 59 to 114 (LESGRPKEMVSTSNNKDGQALGTTSEFIPNLSPELKKPLSEGQPSLKKIILSRKKR) are cleaved as a propeptide — c peptide.

The protein belongs to the insulin family. In terms of tissue distribution, expressed in placenta, uterus and in fetal perichondrium. Expression levels were increased in both early placentas and molar pregnancies and were reduced in choriocarcinoma cells.

Its subcellular location is the secreted. Its function is as follows. May play an important role in trophoblast development and in the regulation of bone formation. In Homo sapiens (Human), this protein is Early placenta insulin-like peptide (INSL4).